Here is a 402-residue protein sequence, read N- to C-terminus: MKEKPAPKKIVLAYSGGLDTSVILAWLKDTYGCEVIAFCADVGQKEELTGLEEKGKNTGASKVYIQDLRLEFARDFIYPAIRGNAIYEMRYLLGTSLARPLIAKAMADVAKKEGADAFSHGATGKGNDQVRFELTFKALSPNLQIIAPWRTWDFGGRADLIEYAKKKGIPVPVTAAKPYSMDRNLMHLSFEGGILEDPYNEPKEDMFILTVSPEKAPDKPTYLELDFENGDCVAIDGKKMNPLEVMETLNDLGGKNGVGRVDIVENRLVGIKSRGVYETPGGTILHIAHRDLESITLDRDTQHKKDELSQEFARYIYNGQWYSNQMNALRAYMDYTQKYVNGTVRIKLYKGNCTVVGRKSNKSLYNAGLSTFEKEELYNQYDAEGFINLYGLPMKEWARVNQ.

ATP is bound by residues 13–21 and Ala40; that span reads AYSGGLDTS. Positions 91 and 96 each coordinate L-citrulline. Residue Gly121 participates in ATP binding. L-aspartate is bound by residues Thr123, Asn127, and Asp128. Asn127 is a binding site for L-citrulline. The L-citrulline site is built by Arg131, Ser180, Ser189, Glu265, and Tyr277.

Belongs to the argininosuccinate synthase family. Type 1 subfamily. Homotetramer.

It localises to the cytoplasm. The catalysed reaction is L-citrulline + L-aspartate + ATP = 2-(N(omega)-L-arginino)succinate + AMP + diphosphate + H(+). It functions in the pathway amino-acid biosynthesis; L-arginine biosynthesis; L-arginine from L-ornithine and carbamoyl phosphate: step 2/3. In Leptospira biflexa serovar Patoc (strain Patoc 1 / Ames), this protein is Argininosuccinate synthase.